The primary structure comprises 230 residues: UPF0173 metal-dependent hydrolase SPO2976 (230 aa).

It belongs to the UPF0173 family.

This chain is UPF0173 metal-dependent hydrolase SPO2976, found in Ruegeria pomeroyi (strain ATCC 700808 / DSM 15171 / DSS-3) (Silicibacter pomeroyi).